A 373-amino-acid polypeptide reads, in one-letter code: Flagellar P-ring protein (373 aa).

Positions 1-26 are cleaved as a signal peptide; that stretch reads MKLFFRIVTLVAVVAMSLADMAPAWA.

Belongs to the FlgI family. As to quaternary structure, the basal body constitutes a major portion of the flagellar organelle and consists of four rings (L,P,S, and M) mounted on a central rod.

Its subcellular location is the periplasm. It is found in the bacterial flagellum basal body. Assembles around the rod to form the L-ring and probably protects the motor/basal body from shearing forces during rotation. The protein is Flagellar P-ring protein of Rhizobium etli (strain ATCC 51251 / DSM 11541 / JCM 21823 / NBRC 15573 / CFN 42).